Reading from the N-terminus, the 360-residue chain is Phospho-N-acetylmuramoyl-pentapeptide-transferase (360 aa).

10 helical membrane-spanning segments follow: residues 21–41, 73–93, 98–118, 132–152, 168–188, 199–219, 236–256, 263–283, 288–308, and 338–358; these read YITF…LWIG, TMGG…WADL, IWFV…DDYW, WKYF…YAVG, VMPQ…VGTS, GLAI…AWAT, AGEL…FLWY, VFMG…IAVL, LLLV…ILQV, and VIVR…VTLK.

It belongs to the glycosyltransferase 4 family. MraY subfamily. Requires Mg(2+) as cofactor.

It localises to the cell inner membrane. The enzyme catalyses UDP-N-acetyl-alpha-D-muramoyl-L-alanyl-gamma-D-glutamyl-meso-2,6-diaminopimeloyl-D-alanyl-D-alanine + di-trans,octa-cis-undecaprenyl phosphate = di-trans,octa-cis-undecaprenyl diphospho-N-acetyl-alpha-D-muramoyl-L-alanyl-D-glutamyl-meso-2,6-diaminopimeloyl-D-alanyl-D-alanine + UMP. Its pathway is cell wall biogenesis; peptidoglycan biosynthesis. Catalyzes the initial step of the lipid cycle reactions in the biosynthesis of the cell wall peptidoglycan: transfers peptidoglycan precursor phospho-MurNAc-pentapeptide from UDP-MurNAc-pentapeptide onto the lipid carrier undecaprenyl phosphate, yielding undecaprenyl-pyrophosphoryl-MurNAc-pentapeptide, known as lipid I. In Actinobacillus pleuropneumoniae serotype 5b (strain L20), this protein is Phospho-N-acetylmuramoyl-pentapeptide-transferase.